Here is a 67-residue protein sequence, read N- to C-terminus: ATP synthase F(0) complex subunit 8 (67 aa).

The helical transmembrane segment at 8–24 (TWFINIVSMILTLFIVF) threads the bilayer. Residue Lys-54 is modified to N6-acetyllysine; alternate. Lys-54 carries the post-translational modification N6-succinyllysine; alternate. Position 57 is an N6-acetyllysine (Lys-57).

Belongs to the ATPase protein 8 family. Component of the ATP synthase complex composed at least of ATP5F1A/subunit alpha, ATP5F1B/subunit beta, ATP5MC1/subunit c (homooctomer), MT-ATP6/subunit a, MT-ATP8/subunit 8, ATP5ME/subunit e, ATP5MF/subunit f, ATP5MG/subunit g, ATP5MK/subunit k, ATP5MJ/subunit j, ATP5F1C/subunit gamma, ATP5F1D/subunit delta, ATP5F1E/subunit epsilon, ATP5PF/subunit F6, ATP5PB/subunit b, ATP5PD/subunit d, ATP5PO/subunit OSCP. ATP synthase complex consists of a soluble F(1) head domain (subunits alpha(3) and beta(3)) - the catalytic core - and a membrane F(0) domain - the membrane proton channel (subunits c, a, 8, e, f, g, k and j). These two domains are linked by a central stalk (subunits gamma, delta, and epsilon) rotating inside the F1 region and a stationary peripheral stalk (subunits F6, b, d, and OSCP). Interacts with PRICKLE3.

It is found in the mitochondrion membrane. In terms of biological role, subunit 8, of the mitochondrial membrane ATP synthase complex (F(1)F(0) ATP synthase or Complex V) that produces ATP from ADP in the presence of a proton gradient across the membrane which is generated by electron transport complexes of the respiratory chain. ATP synthase complex consist of a soluble F(1) head domain - the catalytic core - and a membrane F(1) domain - the membrane proton channel. These two domains are linked by a central stalk rotating inside the F(1) region and a stationary peripheral stalk. During catalysis, ATP synthesis in the catalytic domain of F(1) is coupled via a rotary mechanism of the central stalk subunits to proton translocation. In vivo, can only synthesize ATP although its ATP hydrolase activity can be activated artificially in vitro. Part of the complex F(0) domain. The protein is ATP synthase F(0) complex subunit 8 of Equus caballus (Horse).